Consider the following 150-residue polypeptide: UPF0178 protein Sbal_1771 (150 aa).

The protein belongs to the UPF0178 family.

The protein is UPF0178 protein Sbal_1771 of Shewanella baltica (strain OS155 / ATCC BAA-1091).